A 446-amino-acid polypeptide reads, in one-letter code: Phosphoglucosamine mutase (446 aa).

Residue serine 102 is the Phosphoserine intermediate of the active site. Residues serine 102, aspartate 241, aspartate 243, and aspartate 245 each coordinate Mg(2+). Serine 102 carries the post-translational modification Phosphoserine.

This sequence belongs to the phosphohexose mutase family. The cofactor is Mg(2+). In terms of processing, activated by phosphorylation.

It carries out the reaction alpha-D-glucosamine 1-phosphate = D-glucosamine 6-phosphate. In terms of biological role, catalyzes the conversion of glucosamine-6-phosphate to glucosamine-1-phosphate. The polypeptide is Phosphoglucosamine mutase (Xylella fastidiosa (strain M12)).